The sequence spans 776 residues: Disintegrin and metalloproteinase domain-containing protein 7 (776 aa).

Positions 1–23 (MLPGCIFLMILLILQVKEKVILG) are cleaved as a signal peptide. Residues 24-176 (VEGQQLVYPK…NYSCTELNFT (153 aa)) constitute a propeptide that is removed on maturation. Topologically, residues 26 to 669 (GQQLVYPKKL…WEETLNVTNV (644 aa)) are extracellular. Residues asparagine 84, asparagine 167, and asparagine 174 are each glycosylated (N-linked (GlcNAc...) asparagine). One can recognise a Peptidase M12B domain in the interval 199–394 (KYIELFIVAD…YKPTCMLNIP (196 aa)). Disulfide bonds link cysteine 310–cysteine 389, cysteine 350–cysteine 373, cysteine 352–cysteine 357, and cysteine 460–cysteine 480. The 87-residue stretch at 402 to 488 (FQFCGNKKLD…ACPKDQFRVN (87 aa)) folds into the Disintegrin domain. N-linked (GlcNAc...) asparagine glycosylation is found at asparagine 584, asparagine 629, and asparagine 665. Residues 670-690 (AILIVVLVLVIVGIGVLILLI) form a helical membrane-spanning segment. At 691–776 (RYQKCIKLKQ…GIADPNQSAK (86 aa)) the chain is on the cytoplasmic side. Positions 757–776 (TLKPASKDSRGIADPNQSAK) are disordered.

Interacts with ITM2B in sperm; the interaction increases following capacitation. Interacts with HSPA5 and CANX.

The protein localises to the membrane. Required for normal male fertility via maintenance of epithelial cell morphology in the caput epididymis and subsequently correct epididymis lumen structure required for sperm development. Plays a role in sperm motility, flagella morphology and tyrosine phosphorylation during sperm capacitance. Plays a role in normal expression levels of HSPA5, ITM2B and ADAM2 in sperm both prior to and post-capacitation. This is a non catalytic metalloprotease-like protein. The polypeptide is Disintegrin and metalloproteinase domain-containing protein 7 (ADAM7) (Macaca fascicularis (Crab-eating macaque)).